The primary structure comprises 152 residues: UPF0225 protein YchJ (152 aa).

It belongs to the UPF0225 family.

The sequence is that of UPF0225 protein YchJ from Escherichia coli O17:K52:H18 (strain UMN026 / ExPEC).